A 241-amino-acid polypeptide reads, in one-letter code: MAGHSKWANIQHRKGRQDAKRGKIFTRLIKEITVAAKMGGADLGSNPRLRLAVDKAKAESMPKDNIENAIKRGAGLLDGVDYIECRYEGYGIGGAAVMVDCLTDNKTRTVADVRHAFSKFGGNMGTDGCVAFQFTHCGYLVFAPGTDEDALMEAALESGADDVVSNDDGSIEVITDPNSFSDIKDALEAKGFKAEMGEVTMRAQNETELSGDDAVRMQKLLDALEDLDDVQEVYTSAVLDA.

This sequence belongs to the TACO1 family.

It localises to the cytoplasm. This chain is Probable transcriptional regulatory protein LHK_02347, found in Laribacter hongkongensis (strain HLHK9).